Consider the following 945-residue polypeptide: Isoleucine--tRNA ligase (945 aa).

A 'HIGH' region motif is present at residues 66–76 (PYANGDIHLGH). Position 581 (glutamate 581) interacts with L-isoleucyl-5'-AMP. The 'KMSKS' region motif lies at 622-626 (KMSKS). Lysine 625 is an ATP binding site. Residues cysteine 908, cysteine 911, cysteine 928, and cysteine 931 each coordinate Zn(2+).

It belongs to the class-I aminoacyl-tRNA synthetase family. IleS type 1 subfamily. Monomer. Zn(2+) serves as cofactor.

It localises to the cytoplasm. The catalysed reaction is tRNA(Ile) + L-isoleucine + ATP = L-isoleucyl-tRNA(Ile) + AMP + diphosphate. Catalyzes the attachment of isoleucine to tRNA(Ile). As IleRS can inadvertently accommodate and process structurally similar amino acids such as valine, to avoid such errors it has two additional distinct tRNA(Ile)-dependent editing activities. One activity is designated as 'pretransfer' editing and involves the hydrolysis of activated Val-AMP. The other activity is designated 'posttransfer' editing and involves deacylation of mischarged Val-tRNA(Ile). This Burkholderia lata (strain ATCC 17760 / DSM 23089 / LMG 22485 / NCIMB 9086 / R18194 / 383) protein is Isoleucine--tRNA ligase.